Here is an 890-residue protein sequence, read N- to C-terminus: Alanine--tRNA ligase (890 aa).

4 residues coordinate Zn(2+): His572, His576, Cys674, and His678.

This sequence belongs to the class-II aminoacyl-tRNA synthetase family. Zn(2+) is required as a cofactor.

The protein resides in the cytoplasm. The enzyme catalyses tRNA(Ala) + L-alanine + ATP = L-alanyl-tRNA(Ala) + AMP + diphosphate. Catalyzes the attachment of alanine to tRNA(Ala) in a two-step reaction: alanine is first activated by ATP to form Ala-AMP and then transferred to the acceptor end of tRNA(Ala). Also edits incorrectly charged Ser-tRNA(Ala) and Gly-tRNA(Ala) via its editing domain. The polypeptide is Alanine--tRNA ligase (Saccharopolyspora erythraea (strain ATCC 11635 / DSM 40517 / JCM 4748 / NBRC 13426 / NCIMB 8594 / NRRL 2338)).